Consider the following 262-residue polypeptide: Pyridoxine 5'-phosphate synthase (262 aa).

Asn6 is a 3-amino-2-oxopropyl phosphate binding site. 8–9 lines the 1-deoxy-D-xylulose 5-phosphate pocket; the sequence is DH. A 3-amino-2-oxopropyl phosphate-binding site is contributed by Arg17. The active-site Proton acceptor is His43. 2 residues coordinate 1-deoxy-D-xylulose 5-phosphate: Arg45 and His50. Glu70 (proton acceptor) is an active-site residue. 1-deoxy-D-xylulose 5-phosphate is bound at residue Thr102. His215 serves as the catalytic Proton donor. Residues Gly216 and 237 to 238 contribute to the 3-amino-2-oxopropyl phosphate site; that span reads GH.

Belongs to the PNP synthase family. As to quaternary structure, homooctamer; tetramer of dimers.

The protein resides in the cytoplasm. It carries out the reaction 3-amino-2-oxopropyl phosphate + 1-deoxy-D-xylulose 5-phosphate = pyridoxine 5'-phosphate + phosphate + 2 H2O + H(+). It functions in the pathway cofactor biosynthesis; pyridoxine 5'-phosphate biosynthesis; pyridoxine 5'-phosphate from D-erythrose 4-phosphate: step 5/5. Its function is as follows. Catalyzes the complicated ring closure reaction between the two acyclic compounds 1-deoxy-D-xylulose-5-phosphate (DXP) and 3-amino-2-oxopropyl phosphate (1-amino-acetone-3-phosphate or AAP) to form pyridoxine 5'-phosphate (PNP) and inorganic phosphate. In Helicobacter pylori (strain J99 / ATCC 700824) (Campylobacter pylori J99), this protein is Pyridoxine 5'-phosphate synthase.